Here is a 294-residue protein sequence, read N- to C-terminus: uncharacterized protein (294 aa).

Disordered regions lie at residues valine 25 to arginine 59 and leucine 77 to proline 141. The span at tyrosine 86 to glutamate 139 shows a compositional bias: acidic residues. A coiled-coil region spans residues isoleucine 201 to lysine 234. The segment covering threonine 242–aspartate 259 has biased composition (basic and acidic residues). Positions threonine 242–glutamate 294 are disordered. Acidic residues predominate over residues isoleucine 260 to glutamate 283.

This is an uncharacterized protein from Magallana gigas (Pacific oyster).